The following is a 72-amino-acid chain: uncharacterized protein (72 aa).

This is an uncharacterized protein from Haemophilus influenzae (strain ATCC 51907 / DSM 11121 / KW20 / Rd).